The sequence spans 43 residues: uncharacterized protein (43 aa).

A helical transmembrane segment spans residues 21–41 (SSFALIVVLFILLIIVGAAIF).

Belongs to the SscA family.

It is found in the membrane. This is an uncharacterized protein from Bacillus subtilis (strain 168).